Reading from the N-terminus, the 872-residue chain is Alanine--tRNA ligase (872 aa).

Residues His-567, His-571, Cys-669, and His-673 each coordinate Zn(2+).

The protein belongs to the class-II aminoacyl-tRNA synthetase family. Zn(2+) is required as a cofactor.

It localises to the cytoplasm. It carries out the reaction tRNA(Ala) + L-alanine + ATP = L-alanyl-tRNA(Ala) + AMP + diphosphate. Functionally, catalyzes the attachment of alanine to tRNA(Ala) in a two-step reaction: alanine is first activated by ATP to form Ala-AMP and then transferred to the acceptor end of tRNA(Ala). Also edits incorrectly charged Ser-tRNA(Ala) and Gly-tRNA(Ala) via its editing domain. This Streptococcus agalactiae serotype Ia (strain ATCC 27591 / A909 / CDC SS700) protein is Alanine--tRNA ligase.